A 245-amino-acid polypeptide reads, in one-letter code: OCIA domain-containing protein 1 (245 aa).

The OCIA domain maps to Met1–Glu112. A phosphoserine mark is found at Ser108, Ser116, Ser123, and Ser191. Disordered stretches follow at residues Gly111–Gln141 and Asn169–Glu245. Basic and acidic residues-rich tracts occupy residues Glu190–Tyr210 and Pro224–Lys238.

Belongs to the OCIAD1 family. As to quaternary structure, interacts with OCIAD2. Interacts with STAT3. Isoform 1 is highly expressed in many tissues, including testis, brain, placenta, ovary, prostate and mammary gland. Isoform 2 expression is restricted to the central nervous system including brain, cerebellum and spinal cord.

The protein localises to the endosome. Maintains stem cell potency. Increases STAT3 phosphorylation and controls ERK phosphorylation. May act as a scaffold, increasing STAT3 recruitment onto endosomes. Involved in integrin-mediated cancer cell adhesion and colony formation in ovarian cancer. The protein is OCIA domain-containing protein 1 of Homo sapiens (Human).